The following is a 65-amino-acid chain: Large ribosomal subunit protein bL35 (65 aa).

Residues 1-28 (MPKIKTNRGAAKRFRKTGSGKIRRNKAF) form a disordered region. A compositionally biased stretch (basic residues) spans 10–26 (AAKRFRKTGSGKIRRNK).

The protein belongs to the bacterial ribosomal protein bL35 family.

The sequence is that of Large ribosomal subunit protein bL35 from Syntrophotalea carbinolica (strain DSM 2380 / NBRC 103641 / GraBd1) (Pelobacter carbinolicus).